The primary structure comprises 312 residues: Olfactory receptor 6Z7 (312 aa).

At 1–29 the chain is on the extracellular side; sequence MERSLALANMTRVQQFILLGLSTRLDIRD. N9 carries N-linked (GlcNAc...) asparagine glycosylation. A helical membrane pass occupies residues 30–50; the sequence is ALFAVFLTLYLLTLLENTLII. At 51 to 69 the chain is on the cytoplasmic side; it reads YLICSHKELHKPMYFFLGN. The chain crosses the membrane as a helical span at residues 70–90; that stretch reads LSCLEMCYVSVTMPTLLMGLW. Residue N91 is a topological domain, extracellular. A helical membrane pass occupies residues 92-112; that stretch reads GLYHIPFIACMTQLFFFIVLV. C101 and C193 are oxidised to a cystine. Residues 113-141 lie on the Cytoplasmic side of the membrane; sequence GTECILLASMAYDRYVAICRPLHYPVLMR. Residues 142 to 162 traverse the membrane as a helical segment; sequence PQVCLGLAMISWLGGLLVSMI. Residues 163-195 lie on the Extracellular side of the membrane; that stretch reads KTTCIATLSYCGPNVLNHFFCDVSPLLNLSCTH. An N-linked (GlcNAc...) asparagine glycan is attached at N190. The chain crosses the membrane as a helical span at residues 196 to 216; that stretch reads VALTELVDFISAIVILWGCFL. At 217-241 the chain is on the cytoplasmic side; that stretch reads TTMASYVAIGRAVLRMPSTTARYKA. Residues 242–262 form a helical membrane-spanning segment; that stretch reads FSTCASHLVVVGIFYSVTIFI. Residues 263–275 lie on the Extracellular side of the membrane; that stretch reads YARPKRIEAMDLN. The chain crosses the membrane as a helical span at residues 276 to 296; that stretch reads KVLSVIYTVVTPMCNPVIYCL. Topologically, residues 297–312 are cytoplasmic; sequence RNKEVQVALHRTMHWS.

This sequence belongs to the G-protein coupled receptor 1 family.

It localises to the cell membrane. Odorant receptor. The polypeptide is Olfactory receptor 6Z7 (Mus musculus (Mouse)).